Consider the following 229-residue polypeptide: MTTPLTWHDVLADEKQQPYFLNTLKTVAEERQSGITIYPPQKDVFNAFRFTELGDVKVVILGQDPYHGPGQAHGLAFSVRPGVAIPPSLLNMYKELEATIPGFTRPTHGYLESWARQGVLLLNTVLTVRAGQAHSHASLGWETFTDKVIALINEHCEGVVFLLWGSHAQKKGAIIDRQRHCVLKAPHPSPLSAHRGFFGCNHFVQTNQWLVDRGETPIDWMPVLPAESE.

Asp64 serves as the catalytic Proton acceptor.

Belongs to the uracil-DNA glycosylase (UDG) superfamily. UNG family.

The protein resides in the cytoplasm. The enzyme catalyses Hydrolyzes single-stranded DNA or mismatched double-stranded DNA and polynucleotides, releasing free uracil.. Functionally, excises uracil residues from the DNA which can arise as a result of misincorporation of dUMP residues by DNA polymerase or due to deamination of cytosine. This is Uracil-DNA glycosylase from Klebsiella pneumoniae subsp. pneumoniae (strain ATCC 700721 / MGH 78578).